We begin with the raw amino-acid sequence, 440 residues long: MPTPSTFVDQTKIEVQAGKGGDGMVAFRHEKFMPNGGPAGGDGGRGGSIIFVADNGLRTLMDFRYRRKFKAEPGENGRIKAQYGKAAKDLYLKVPVGTTVYDFFTGEEIGDLVENGQELVVAKGGRGGRGNIHFATSVNTAPEIAENGEPGEFRTLRLELKVLADVGLVGFPSVGKSTLLSVVTSAKPKIAAYQFTTLKPNLGMVLLPDGRDFSMADLPGLIKGASQGVGLGIQFLRHVERTKVILHMVSMDPNNGRDAYEDYETILHELASYTEDDLSSKREIIVASQMDIPGADEKLAQFKKDLAAHGVDQEVYELSSVTHQGVDRLMSRAADLVSEVEAQEAEAAVKPKEEVKTKTYKYHRPEKMEFTVEKLADHEFEIHGEQLERLVAMTNLDHQDGIMRLARRLKRMGVDDELRAQGAVDGDDVYIGDFSFEFVQ.

Residues 5–163 (STFVDQTKIE…RTLRLELKVL (159 aa)) form the Obg domain. Residues 164–338 (ADVGLVGFPS…LMSRAADLVS (175 aa)) enclose the OBG-type G domain. Residues 170–177 (GFPSVGKS), 195–199 (FTTLK), 217–220 (DLPG), 288–291 (SQMD), and 319–321 (SSV) contribute to the GTP site. Mg(2+)-binding residues include serine 177 and threonine 197. The OCT domain occupies 362–440 (YHRPEKMEFT…IGDFSFEFVQ (79 aa)).

The protein belongs to the TRAFAC class OBG-HflX-like GTPase superfamily. OBG GTPase family. In terms of assembly, monomer. The cofactor is Mg(2+).

The protein resides in the cytoplasm. An essential GTPase which binds GTP, GDP and possibly (p)ppGpp with moderate affinity, with high nucleotide exchange rates and a fairly low GTP hydrolysis rate. Plays a role in control of the cell cycle, stress response, ribosome biogenesis and in those bacteria that undergo differentiation, in morphogenesis control. The protein is GTPase Obg of Lactobacillus delbrueckii subsp. bulgaricus (strain ATCC 11842 / DSM 20081 / BCRC 10696 / JCM 1002 / NBRC 13953 / NCIMB 11778 / NCTC 12712 / WDCM 00102 / Lb 14).